Reading from the N-terminus, the 371-residue chain is uncharacterized protein (371 aa).

This is an uncharacterized protein from Rickettsia prowazekii (strain Madrid E).